Consider the following 278-residue polypeptide: Adenosylcobinamide-GDP ribazoletransferase (278 aa).

The next 7 membrane-spanning stretches (helical) occupy residues 31–51 (AMAL…SAVF), 66–86 (TLLP…GLHL), 115–135 (TIGA…VGAL), 148–168 (ILVA…GAVP), 187–207 (DAAL…LLDF), 215–237 (ALRA…RYLL), and 247–267 (ILGG…AMTI).

It belongs to the CobS family. Requires Mg(2+) as cofactor.

The protein resides in the cell membrane. The enzyme catalyses alpha-ribazole + adenosylcob(III)inamide-GDP = adenosylcob(III)alamin + GMP + H(+). The catalysed reaction is alpha-ribazole 5'-phosphate + adenosylcob(III)inamide-GDP = adenosylcob(III)alamin 5'-phosphate + GMP + H(+). It participates in cofactor biosynthesis; adenosylcobalamin biosynthesis; adenosylcobalamin from cob(II)yrinate a,c-diamide: step 7/7. Joins adenosylcobinamide-GDP and alpha-ribazole to generate adenosylcobalamin (Ado-cobalamin). Also synthesizes adenosylcobalamin 5'-phosphate from adenosylcobinamide-GDP and alpha-ribazole 5'-phosphate. This Frankia casuarinae (strain DSM 45818 / CECT 9043 / HFP020203 / CcI3) protein is Adenosylcobinamide-GDP ribazoletransferase.